Consider the following 2798-residue polypeptide: Kinesin-like protein KIN-12F (2798 aa).

Positions 1 to 165 (MVRDLAAVRR…RPPMSSGQRG (165 aa)) are disordered. 2 stretches are compositionally biased toward low complexity: residues 8 to 22 (VRRTPARASTSSSAS) and 31 to 58 (PVDASDAAVVEPEAAAARPPLLAIQPPQ). One can recognise a Kinesin motor domain in the interval 210–547 (NVQVVIRVRP…LKFAQRARLI (338 aa)). 291–298 (GQTGSGKT) is a binding site for ATP. The segment covering 600–615 (DVDDGTESMNMDEEND) has biased composition (acidic residues). A disordered region spans residues 600–621 (DVDDGTESMNMDEENDNDAHDR). Coiled coils occupy residues 792–835 (ELKR…HSSN), 890–987 (LAEE…HRRQ), 1014–1108 (LKRM…VMKE), 1281–1322 (QRAM…LKNE), and 2130–2333 (ELVD…VRQQ). Positions 2338–2359 (PSSGQATSSLEGGMGDFTDSSR) are disordered. Coiled-coil stretches lie at residues 2361-2427 (SREI…VKSD) and 2545-2758 (ESKE…LKLK). The disordered stretch occupies residues 2772 to 2798 (RSESSSLSSGRSRSPSVCRSPSISSFR). The span at 2774-2798 (ESSSLSSGRSRSPSVCRSPSISSFR) shows a compositional bias: low complexity.

Belongs to the TRAFAC class myosin-kinesin ATPase superfamily. Kinesin family. KIN-12 subfamily.

The sequence is that of Kinesin-like protein KIN-12F from Oryza sativa subsp. japonica (Rice).